The following is a 414-amino-acid chain: Glutathione gamma-glutamylcysteinyltransferase (414 aa).

Positions 37–256 constitute a Peptidase C83 domain; that stretch reads QLKKSFYKRQ…GYVLLEPMHI (220 aa).

It belongs to the phytochelatin synthase family.

The catalysed reaction is [Glu(-Cys)](n)-Gly + glutathione + H(+) = [Glu(-Cys)](n+1)-Gly + glycine. Required for detoxification of heavy metals such as cadmium and arsenate. The protein is Glutathione gamma-glutamylcysteinyltransferase of Schizosaccharomyces pombe (strain 972 / ATCC 24843) (Fission yeast).